The sequence spans 299 residues: Ribosomal protein L11 methyltransferase (299 aa).

4 residues coordinate S-adenosyl-L-methionine: Thr-140, Gly-161, Asp-183, and Asn-232.

The protein belongs to the methyltransferase superfamily. PrmA family.

The protein resides in the cytoplasm. The catalysed reaction is L-lysyl-[protein] + 3 S-adenosyl-L-methionine = N(6),N(6),N(6)-trimethyl-L-lysyl-[protein] + 3 S-adenosyl-L-homocysteine + 3 H(+). Its function is as follows. Methylates ribosomal protein L11. The polypeptide is Ribosomal protein L11 methyltransferase (Synechococcus elongatus (strain ATCC 33912 / PCC 7942 / FACHB-805) (Anacystis nidulans R2)).